The sequence spans 693 residues: Polyribonucleotide nucleotidyltransferase (693 aa).

Positions 489 and 495 each coordinate Mg(2+). Residues 556–615 (PQIHIMNVNPAKIKDVVGRGGSVVKGIVEKTGAQIDTSDSGEVKIFAKDKRSLDLAKSMV) form the KH domain. In terms of domain architecture, S1 motif spans 625–693 (GQIYKGKIVK…GRVKLSLVAR (69 aa)).

It belongs to the polyribonucleotide nucleotidyltransferase family. In terms of assembly, component of the RNA degradosome, which is a multiprotein complex involved in RNA processing and mRNA degradation. The cofactor is Mg(2+).

It is found in the cytoplasm. The catalysed reaction is RNA(n+1) + phosphate = RNA(n) + a ribonucleoside 5'-diphosphate. Functionally, involved in mRNA degradation. Catalyzes the phosphorolysis of single-stranded polyribonucleotides processively in the 3'- to 5'-direction. The sequence is that of Polyribonucleotide nucleotidyltransferase from Francisella philomiragia subsp. philomiragia (strain ATCC 25017 / CCUG 19701 / FSC 153 / O#319-036).